Reading from the N-terminus, the 144-residue chain is 3-dehydroquinate dehydratase (144 aa).

Tyr-23 serves as the catalytic Proton acceptor. Substrate-binding residues include Asn-74, His-80, and Asp-87. The active-site Proton donor is the His-101. Substrate-binding positions include Leu-102–Ser-103 and Arg-112.

It belongs to the type-II 3-dehydroquinase family. Homododecamer.

The catalysed reaction is 3-dehydroquinate = 3-dehydroshikimate + H2O. Its pathway is metabolic intermediate biosynthesis; chorismate biosynthesis; chorismate from D-erythrose 4-phosphate and phosphoenolpyruvate: step 3/7. Its function is as follows. Catalyzes a trans-dehydration via an enolate intermediate. The sequence is that of 3-dehydroquinate dehydratase from Mesorhizobium japonicum (strain LMG 29417 / CECT 9101 / MAFF 303099) (Mesorhizobium loti (strain MAFF 303099)).